A 388-amino-acid chain; its full sequence is 1-deoxy-D-xylulose 5-phosphate reductoisomerase (388 aa).

Residues Thr15, Gly16, Ser17, Ile18, and Asn127 each coordinate NADPH. Lys128 provides a ligand contact to 1-deoxy-D-xylulose 5-phosphate. Glu129 lines the NADPH pocket. Mn(2+) is bound at residue Asp153. 4 residues coordinate 1-deoxy-D-xylulose 5-phosphate: Ser154, Glu155, Ser179, and His202. Glu155 is a binding site for Mn(2+). Gly208 contacts NADPH. Residues Ser215, Asn220, Lys221, and Glu224 each contribute to the 1-deoxy-D-xylulose 5-phosphate site. Position 224 (Glu224) interacts with Mn(2+).

The protein belongs to the DXR family. Mg(2+) serves as cofactor. The cofactor is Mn(2+).

The enzyme catalyses 2-C-methyl-D-erythritol 4-phosphate + NADP(+) = 1-deoxy-D-xylulose 5-phosphate + NADPH + H(+). It functions in the pathway isoprenoid biosynthesis; isopentenyl diphosphate biosynthesis via DXP pathway; isopentenyl diphosphate from 1-deoxy-D-xylulose 5-phosphate: step 1/6. Functionally, catalyzes the NADPH-dependent rearrangement and reduction of 1-deoxy-D-xylulose-5-phosphate (DXP) to 2-C-methyl-D-erythritol 4-phosphate (MEP). The polypeptide is 1-deoxy-D-xylulose 5-phosphate reductoisomerase (Bacteroides fragilis (strain ATCC 25285 / DSM 2151 / CCUG 4856 / JCM 11019 / LMG 10263 / NCTC 9343 / Onslow / VPI 2553 / EN-2)).